A 78-amino-acid chain; its full sequence is Short neurotoxin SNTX6 (78 aa).

The signal sequence occupies residues 1-21; sequence MKTLLLTFLVVTIVCLDLGYT. 4 disulfides stabilise this stretch: Cys-24-Cys-40, Cys-33-Cys-58, Cys-62-Cys-70, and Cys-71-Cys-76.

Belongs to the three-finger toxin family. Short-chain subfamily. In terms of tissue distribution, expressed by the venom gland.

It is found in the secreted. In terms of biological role, this three-finger toxin binds and inhibits the nicotinic acetylcholine receptor (nAChR). This Ophiophagus hannah (King cobra) protein is Short neurotoxin SNTX6.